A 505-amino-acid polypeptide reads, in one-letter code: Cytochrome P450 2K6 (505 aa).

The chain crosses the membrane as a helical span at residues 7-27 (FLLQGSPTGTILGALLLFLVI). Residue cysteine 448 participates in heme binding.

Belongs to the cytochrome P450 family. Heme serves as cofactor. As to expression, detected in liver and ovary.

Its subcellular location is the endoplasmic reticulum membrane. It is found in the microsome membrane. Functionally, metabolizes aflatoxin B1 (AFB1) to the cytotoxic derivative AFB1 exo-8,9-epoxide. Does not show activity towards lauric acid. This is Cytochrome P450 2K6 from Danio rerio (Zebrafish).